The following is a 149-amino-acid chain: Large ribosomal subunit protein uL16c (149 aa).

This sequence belongs to the universal ribosomal protein uL16 family. In terms of assembly, part of the 50S ribosomal subunit.

The protein localises to the plastid. The protein resides in the organellar chromatophore. The polypeptide is Large ribosomal subunit protein uL16c (rpl16) (Paulinella chromatophora).